A 192-amino-acid chain; its full sequence is Leucyl/phenylalanyl-tRNA--protein transferase (192 aa).

It belongs to the L/F-transferase family.

Its subcellular location is the cytoplasm. The enzyme catalyses N-terminal L-lysyl-[protein] + L-leucyl-tRNA(Leu) = N-terminal L-leucyl-L-lysyl-[protein] + tRNA(Leu) + H(+). It catalyses the reaction N-terminal L-arginyl-[protein] + L-leucyl-tRNA(Leu) = N-terminal L-leucyl-L-arginyl-[protein] + tRNA(Leu) + H(+). It carries out the reaction L-phenylalanyl-tRNA(Phe) + an N-terminal L-alpha-aminoacyl-[protein] = an N-terminal L-phenylalanyl-L-alpha-aminoacyl-[protein] + tRNA(Phe). In terms of biological role, functions in the N-end rule pathway of protein degradation where it conjugates Leu, Phe and, less efficiently, Met from aminoacyl-tRNAs to the N-termini of proteins containing an N-terminal arginine or lysine. This is Leucyl/phenylalanyl-tRNA--protein transferase from Synechococcus sp. (strain JA-3-3Ab) (Cyanobacteria bacterium Yellowstone A-Prime).